Reading from the N-terminus, the 190-residue chain is Elongation factor P 2 (190 aa).

It belongs to the elongation factor P family.

The protein resides in the cytoplasm. It participates in protein biosynthesis; polypeptide chain elongation. Its function is as follows. Involved in peptide bond synthesis. Stimulates efficient translation and peptide-bond synthesis on native or reconstituted 70S ribosomes in vitro. Probably functions indirectly by altering the affinity of the ribosome for aminoacyl-tRNA, thus increasing their reactivity as acceptors for peptidyl transferase. This is Elongation factor P 2 (efp2) from Chlamydia muridarum (strain MoPn / Nigg).